Here is a 452-residue protein sequence, read N- to C-terminus: 1,4-beta-D-glucan cellobiohydrolase A (452 aa).

The first 17 residues, 1-17 (MHQRALLFSALLTAVRA), serve as a signal peptide directing secretion. Asn62 is a glycosylation site (N-linked (GlcNAc...) asparagine). Glu227 acts as the Nucleophile in catalysis. The active-site Proton donor is the Glu232. Asn285, Asn335, Asn402, and Asn445 each carry an N-linked (GlcNAc...) asparagine glycan.

It belongs to the glycosyl hydrolase 7 (cellulase C) family.

The protein resides in the secreted. It carries out the reaction Hydrolysis of (1-&gt;4)-beta-D-glucosidic linkages in cellulose and cellotetraose, releasing cellobiose from the non-reducing ends of the chains.. Its function is as follows. The biological conversion of cellulose to glucose generally requires three types of hydrolytic enzymes: (1) Endoglucanases which cut internal beta-1,4-glucosidic bonds; (2) Exocellobiohydrolases that cut the disaccharide cellobiose from the non-reducing end of the cellulose polymer chain; (3) Beta-1,4-glucosidases which hydrolyze the cellobiose and other short cello-oligosaccharides to glucose. In Aspergillus niger, this protein is 1,4-beta-D-glucan cellobiohydrolase A (cbhA).